Reading from the N-terminus, the 182-residue chain is UPF0148 protein VNG_2366C (182 aa).

The segment at 1 to 162 is disordered; the sequence is MSNTDDGFDK…RASDADDPRT (162 aa). Basic and acidic residues-rich tracts occupy residues 7–33 and 47–62; these read GFDK…ETAR and DHCD…HDGE. A compositionally biased stretch (low complexity) spans 105–122; it reads PDTSSSTAAATDDVPTAA. A compositionally biased stretch (basic and acidic residues) spans 153–162; that stretch reads RASDADDPRT.

It belongs to the UPF0148 family.

The polypeptide is UPF0148 protein VNG_2366C (Halobacterium salinarum (strain ATCC 700922 / JCM 11081 / NRC-1) (Halobacterium halobium)).